Reading from the N-terminus, the 495-residue chain is MTVMSGENADEASAAPGHPQDGSYPRQADHDDHECCERVVINISGLRFETQLKTLAQFPNTLLGNPKKRMRYFDPLRNEYFFDRNRPSFDAILYYYQSGGRLRRPVNVPLDMFSEEIKFYELGEEAMEKFREDEGFIKEEERPLPEKEYQRQVWLLFEYPESSGPARVIAIVSVMVILISIVIFCLETLPELKDDKDFTGTIHRIDNTTVIYTSNIFTDPFFIVETLCIIWFSFELVVRFFACPSKTDFFKNIMNFIDIVAIIPYFITLGTEIAEQEGNQKGEQATSLAILRVIRLVRVFRIFKLSRHSKGLQILGQTLKASMRELGLLIFFLFIGVILFSSAVYFAEAEEAESHFSSIPDAFWWAVVSMTTVGYGDMYPVTIGGKIVGSLCAIAGVLTIALPVPVIVSNFNYFYHRETEGEEQAQLLHVSSPNLASDSDLSRRSSSTISKSEYMEIEEDMNNSIAHYRQANIRTGNCTATDQNCVNKSKLLTDV.

Positions 1–30 (MTVMSGENADEASAAPGHPQDGSYPRQADH) are disordered. The segment at 1 to 128 (MTVMSGENAD…FYELGEEAME (128 aa)) is tetramerization domain. The Cytoplasmic portion of the chain corresponds to 1 to 164 (MTVMSGENAD…LLFEYPESSG (164 aa)). Residue S23 is modified to Phosphoserine. The chain crosses the membrane as a helical span at residues 165 to 186 (PARVIAIVSVMVILISIVIFCL). Over 187-220 (ETLPELKDDKDFTGTIHRIDNTTVIYTSNIFTDP) the chain is Extracellular. N207 carries N-linked (GlcNAc...) asparagine glycosylation. The helical transmembrane segment at 221 to 242 (FFIVETLCIIWFSFELVVRFFA) threads the bilayer. A lipid anchor (S-palmitoyl cysteine) is attached at C243. Residues 243–253 (CPSKTDFFKNI) lie on the Cytoplasmic side of the membrane. Residues 254 to 274 (MNFIDIVAIIPYFITLGTEIA) form a helical membrane-spanning segment. Residues 275–287 (EQEGNQKGEQATS) lie on the Extracellular side of the membrane. A helical; Voltage-sensor transmembrane segment spans residues 288-308 (LAILRVIRLVRVFRIFKLSRH). Over 309 to 323 (SKGLQILGQTLKASM) the chain is Cytoplasmic. An S4-S5 linker region spans residues 310 to 323 (KGLQILGQTLKASM). Phosphoserine; by PKA is present on S322. A helical membrane pass occupies residues 324–345 (RELGLLIFFLFIGVILFSSAVY). Topologically, residues 346–359 (FAEAEEAESHFSSI) are extracellular. Positions 360–371 (PDAFWWAVVSMT) form an intramembrane region, helical. The Selectivity filter motif lies at 372 to 377 (TVGYGD). The stretch at 372–379 (TVGYGDMY) is an intramembrane region. Residues 380 to 386 (PVTIGGK) lie on the Extracellular side of the membrane. The chain crosses the membrane as a helical span at residues 387-415 (IVGSLCAIAGVLTIALPVPVIVSNFNYFY). At 416-495 (HRETEGEEQA…VNKSKLLTDV (80 aa)) the chain is on the cytoplasmic side. Residues S437 and S439 each carry the phosphoserine modification. The residue at position 446 (S446) is a Phosphoserine; by PKA. The PDZ-binding motif lies at 493 to 495 (TDV).

Belongs to the potassium channel family. A (Shaker) (TC 1.A.1.2) subfamily. Kv1.1/KCNA1 sub-subfamily. Homotetramer and heterotetramer with other channel-forming alpha subunits, such as KCNA2, KCNA4, KCNA5, KCNA6 and KCNA7. Channel activity is regulated by interaction with the beta subunits KCNAB1 and KCNAB2. Identified in a complex with KCNA2 and KCNAB2. Interacts (via C-terminus) with the PDZ domains of DLG1, DLG2 and DLG4. Interacts with LGI1 within a complex containing LGI1, KCNA4 and KCNAB1. Interacts (via cytoplasmic N-terminal domain) with KCNRG; this inhibits channel activity. Interacts with ANK3; this inhibits channel activity. Interacts (via N-terminus) with STX1A; this promotes channel inactivation. Interacts (via N-terminus) with the heterodimer formed by GNB1 and GNG2; this promotes channel inactivation. Can interact simultaneously with STX1A and the heterodimer formed by GNB1 and GNG2. Interacts with ADAM11. Palmitoylated on Cys-243; which may be required for membrane targeting. In terms of processing, N-glycosylated. Post-translationally, phosphorylated on tyrosine residues. Phosphorylation increases in response to NRG1; this inhibits channel activity. Phosphorylated by PKA. Phosphorylation at Ser-446 regulates channel activity by down-regulating expression at the cell membrane. In terms of tissue distribution, detected in hippocampus, in the middle third of the molecular layer of the dentate gyrus and in stratum radiatum and stratum oriens. Detected in the mossy fiber zone in the hippocampus CA3 region, at or near axon terminals. Detected in brain cortex, at basket cell terminals. Detected adjacent to nodes of Ranvier in juxtaparanodal zones in spinal cord nerve fibers, but also in paranodal regions in some myelinated spinal cord axons. Detected in juxtaparanodal regions adjacent to the nodes of Ranvier in myelinated axons in cerebellar white matter. Detected in sensory neurons. Detected in neurons from the medial nucleus of the trapezoid body. Detected in basolateral amygdala. Detected in the paraventricular nucleus of the hypothalamus. Detected in the islet of Langerhans (at protein level).

The protein resides in the cell membrane. It localises to the membrane. It is found in the cell projection. The protein localises to the axon. Its subcellular location is the cytoplasmic vesicle. The protein resides in the perikaryon. It localises to the endoplasmic reticulum. It is found in the dendrite. The protein localises to the cell junction. Its subcellular location is the synapse. The protein resides in the presynapse. It localises to the presynaptic cell membrane. It carries out the reaction K(+)(in) = K(+)(out). Its activity is regulated as follows. Inhibited by 4-aminopyridine (4-AP) and by tetraethylammonium (TEA). Inhibited by kaliotoxin (KTX). Functionally, voltage-gated potassium channel that mediates transmembrane potassium transport in excitable membranes, primarily in the brain and the central nervous system, but also in the kidney. Contributes to the regulation of the membrane potential and nerve signaling, and prevents neuronal hyperexcitability. Forms tetrameric potassium-selective channels through which potassium ions pass in accordance with their electrochemical gradient. The channel alternates between opened and closed conformations in response to the voltage difference across the membrane. Can form functional homotetrameric channels and heterotetrameric channels that contain variable proportions of KCNA1, KCNA2, KCNA4, KCNA5, KCNA6, KCNA7, and possibly other family members as well; channel properties depend on the type of alpha subunits that are part of the channel. Channel properties are modulated by cytoplasmic beta subunits that regulate the subcellular location of the alpha subunits and promote rapid inactivation of delayed rectifier potassium channels. In vivo, membranes probably contain a mixture of heteromeric potassium channel complexes, making it difficult to assign currents observed in intact tissues to any particular potassium channel family member. Homotetrameric KCNA1 forms a delayed-rectifier potassium channel that opens in response to membrane depolarization, followed by slow spontaneous channel closure. In contrast, a heterotetrameric channel formed by KCNA1 and KCNA4 shows rapid inactivation. Regulates neuronal excitability in hippocampus, especially in mossy fibers and medial perforant path axons, preventing neuronal hyperexcitability. Response to toxins that are selective for KCNA1, respectively for KCNA2, suggests that heteromeric potassium channels composed of both KCNA1 and KCNA2 play a role in pacemaking and regulate the output of deep cerebellar nuclear neurons. May function as down-stream effector for G protein-coupled receptors and inhibit GABAergic inputs to basolateral amygdala neurons. May contribute to the regulation of neurotransmitter release, such as gamma-aminobutyric acid (GABA) release. Plays a role in regulating the generation of action potentials and preventing hyperexcitability in myelinated axons of the vagus nerve, and thereby contributes to the regulation of heart contraction. Required for normal neuromuscular responses. Regulates the frequency of neuronal action potential firing in response to mechanical stimuli, and plays a role in the perception of pain caused by mechanical stimuli, but does not play a role in the perception of pain due to heat stimuli. Required for normal responses to auditory stimuli and precise location of sound sources, but not for sound perception. The use of toxins that block specific channels suggest that it contributes to the regulation of the axonal release of the neurotransmitter dopamine. Required for normal postnatal brain development and normal proliferation of neuronal precursor cells in the brain. Plays a role in the reabsorption of Mg(2+) in the distal convoluted tubules in the kidney and in magnesium ion homeostasis, probably via its effect on the membrane potential. The chain is Potassium voltage-gated channel subfamily A member 1 from Rattus norvegicus (Rat).